The sequence spans 226 residues: MKKITIAIDGFSSTGKSTLAKQLANHLGYIFVDSGAMYRAITYYALQNEYINQDLFNKEKLIKNLPQIKLEFQFNPKLGFAEMYLNDANVEKEIRTIKVSNYVSQVAAISQVRAKLVEQQQQMGKNKGIVMDGRDIGTVVFPTAELKIFMTASAQTRAQRRYDEMSSNSENVSYDEVLKNVQERDFIDTHREDSPLVKANDAIEIDNSHLSREEQFKIVLDLVNNI.

10 to 18 (GFSSTGKST) serves as a coordination point for ATP.

The protein belongs to the cytidylate kinase family. Type 1 subfamily.

It is found in the cytoplasm. It catalyses the reaction CMP + ATP = CDP + ADP. The enzyme catalyses dCMP + ATP = dCDP + ADP. The sequence is that of Cytidylate kinase from Flavobacterium psychrophilum (strain ATCC 49511 / DSM 21280 / CIP 103535 / JIP02/86).